Reading from the N-terminus, the 432-residue chain is 3-phosphoshikimate 1-carboxyvinyltransferase (432 aa).

Residues lysine 22, serine 23, and arginine 27 each coordinate 3-phosphoshikimate. Lysine 22 lines the phosphoenolpyruvate pocket. Phosphoenolpyruvate-binding residues include glycine 96 and arginine 127. 3-phosphoshikimate is bound by residues serine 173, serine 174, glutamine 175, serine 201, aspartate 316, asparagine 339, and lysine 343. Glutamine 175 contacts phosphoenolpyruvate. Aspartate 316 (proton acceptor) is an active-site residue. 3 residues coordinate phosphoenolpyruvate: arginine 347, arginine 391, and lysine 416.

The protein belongs to the EPSP synthase family. As to quaternary structure, monomer.

It localises to the cytoplasm. It carries out the reaction 3-phosphoshikimate + phosphoenolpyruvate = 5-O-(1-carboxyvinyl)-3-phosphoshikimate + phosphate. The protein operates within metabolic intermediate biosynthesis; chorismate biosynthesis; chorismate from D-erythrose 4-phosphate and phosphoenolpyruvate: step 6/7. Functionally, catalyzes the transfer of the enolpyruvyl moiety of phosphoenolpyruvate (PEP) to the 5-hydroxyl of shikimate-3-phosphate (S3P) to produce enolpyruvyl shikimate-3-phosphate and inorganic phosphate. The polypeptide is 3-phosphoshikimate 1-carboxyvinyltransferase (Actinobacillus pleuropneumoniae serotype 5b (strain L20)).